The following is a 387-amino-acid chain: MSFPSDSVGLVTPQKFQFEEPLHLECGRVLPRFELMVETYGTLNADYSNAILICHALSGHHHAAGYHHDDDKKAGWWDACIGPGKAIDTNKFFVVALNNIGGCNGSTGPTSPNPENENRPYGPDFPLVTVRDWVKTQALLSDHLGIQSWYAVIGGSLGGMQALQWSVDYPDRLKNCVIIASAPKLSAQNIAFNEVARQSILSDPDFYHGRYLEHDSYPKRGLILARMVGHITYLSEEAMKQKFGRDLKSGKFMYGFDVEFQVESYLRYQGEQFSRNFDANTYLIMTKALDYFDPSREYEQSLTKAMAQTQCRFLVVSFTTDWRFAPERSQEIVDALITNHKPVTYLDVDAEQGHDSFLFPIPLYVKTLRAFLGGEAHLKSTPQVEIN.

The AB hydrolase-1 domain maps to 49–358 (NAILICHALS…DAEQGHDSFL (310 aa)). S156 acts as the Nucleophile in catalysis. Residue R226 participates in substrate binding. Residues D321 and H354 contribute to the active site. A substrate-binding site is contributed by D355.

This sequence belongs to the AB hydrolase superfamily. MetX family. As to quaternary structure, homodimer.

The protein localises to the cytoplasm. The catalysed reaction is L-homoserine + succinyl-CoA = O-succinyl-L-homoserine + CoA. It participates in amino-acid biosynthesis; L-methionine biosynthesis via de novo pathway; O-succinyl-L-homoserine from L-homoserine: step 1/1. Its activity is regulated as follows. Requires MetW for activity. Functionally, transfers a succinyl group from succinyl-CoA to L-homoserine, forming succinyl-L-homoserine. This chain is Homoserine O-succinyltransferase, found in Acinetobacter baylyi (strain ATCC 33305 / BD413 / ADP1).